The chain runs to 233 residues: Endo-1,4-beta-xylanase 1 (233 aa).

An N-terminal signal peptide occupies residues M1–A20. An N-linked (GlcNAc...) asparagine glycan is attached at N27. One can recognise a GH11 domain in the interval Q40–Q230. E126 acts as the Nucleophile in catalysis. E217 acts as the Proton donor in catalysis.

Belongs to the glycosyl hydrolase 11 (cellulase G) family.

The protein resides in the secreted. It carries out the reaction Endohydrolysis of (1-&gt;4)-beta-D-xylosidic linkages in xylans.. It participates in glycan degradation; xylan degradation. Its function is as follows. Endo-1,4-beta-xylanase involved in the hydrolysis of xylan, a major structural heterogeneous polysaccharide found in plant biomass representing the second most abundant polysaccharide in the biosphere, after cellulose. Accounts for approximately 70 percent of the endoxylanase activity in the culture filtrate. In Pyricularia grisea (Crabgrass-specific blast fungus), this protein is Endo-1,4-beta-xylanase 1 (XYL1).